We begin with the raw amino-acid sequence, 276 residues long: MPIDNLPPLREVIDIYGLQAHKSLGQNFLFDLNLTSKIAHQAGNIEGKPVIEVGPGPGGLTRALLAKGALVIAIERDERCIPALLAIEKHYPKKLKLICNDALKQNFSKLFETYPEKPRIIANLPYNIGTQLLLNWLLVEPWPPFYESMTLMFQREVAKRITAKPQSAYYGRLSVLTGWRTTAKIAFDVPPQAFIPAPKITSSVVHIIPRIQPLTCSAQKLSFVTKTAFGQRRKMLRQNLKTLGGEMLLAKAGIDGTRRAETLSISEFVTLANLVI.

Residues Asn-27, Leu-29, Gly-54, Glu-75, Asp-101, and Asn-123 each coordinate S-adenosyl-L-methionine.

Belongs to the class I-like SAM-binding methyltransferase superfamily. rRNA adenine N(6)-methyltransferase family. RsmA subfamily.

Its subcellular location is the cytoplasm. It carries out the reaction adenosine(1518)/adenosine(1519) in 16S rRNA + 4 S-adenosyl-L-methionine = N(6)-dimethyladenosine(1518)/N(6)-dimethyladenosine(1519) in 16S rRNA + 4 S-adenosyl-L-homocysteine + 4 H(+). Its function is as follows. Specifically dimethylates two adjacent adenosines (A1518 and A1519) in the loop of a conserved hairpin near the 3'-end of 16S rRNA in the 30S particle. May play a critical role in biogenesis of 30S subunits. The protein is Ribosomal RNA small subunit methyltransferase A of Bartonella quintana (strain Toulouse) (Rochalimaea quintana).